The primary structure comprises 241 residues: Ribulose-phosphate 3-epimerase 1 (241 aa).

A substrate-binding site is contributed by Ser-21. Positions 46, 48, and 79 each coordinate a divalent metal cation. Asp-48 functions as the Proton acceptor in the catalytic mechanism. Substrate-binding positions include His-79, Gly-155 to Gly-158, Asp-192 to Gly-194, and Gly-214 to Ser-215. Asp-192 lines the a divalent metal cation pocket. The active-site Proton donor is Asp-192.

This sequence belongs to the ribulose-phosphate 3-epimerase family. It depends on a divalent metal cation as a cofactor.

The enzyme catalyses D-ribulose 5-phosphate = D-xylulose 5-phosphate. Its pathway is carbohydrate degradation. Functionally, catalyzes the reversible epimerization of D-ribulose 5-phosphate to D-xylulose 5-phosphate. The protein is Ribulose-phosphate 3-epimerase 1 of Cupriavidus necator (strain ATCC 17699 / DSM 428 / KCTC 22496 / NCIMB 10442 / H16 / Stanier 337) (Ralstonia eutropha).